Reading from the N-terminus, the 255-residue chain is Hydroxyacylglutathione hydrolase (255 aa).

Positions 52, 54, 56, 57, 109, 126, and 166 each coordinate Zn(2+).

Belongs to the metallo-beta-lactamase superfamily. Glyoxalase II family. Monomer. The cofactor is Zn(2+).

It carries out the reaction an S-(2-hydroxyacyl)glutathione + H2O = a 2-hydroxy carboxylate + glutathione + H(+). It functions in the pathway secondary metabolite metabolism; methylglyoxal degradation; (R)-lactate from methylglyoxal: step 2/2. Functionally, thiolesterase that catalyzes the hydrolysis of S-D-lactoyl-glutathione to form glutathione and D-lactic acid. The sequence is that of Hydroxyacylglutathione hydrolase from Anaeromyxobacter dehalogenans (strain 2CP-C).